Reading from the N-terminus, the 742-residue chain is ATP-dependent RNA helicase DBP7 (742 aa).

Residues 45 to 100 are disordered; the sequence is GKTVSRKRKANTTGDEGIIPGRGENSIKKLHKESSYSSEEQEKYKGRNAHNTQGRT. The Q motif motif lies at 143-172; that stretch reads DQFASLGVSSLLVSHLEQKMRIKKPTSIQK. The Helicase ATP-binding domain occupies 178-372; sequence IIGNAGKNDF…NVALKDYKLI (195 aa). 191-198 is an ATP binding site; it reads AQTGSGKT. Residues 307 to 310 carry the DEGD box motif; sequence DEGD. The 201-residue stretch at 405–605 folds into the Helicase C-terminal domain; it reads TLAATLNNIT…ILMPAFKDVN (201 aa). The disordered stretch occupies residues 701-726; that stretch reads AMGLQSSKDGNSEKKPTKENSKNKMF. Over residues 710–722 the composition is skewed to basic and acidic residues; sequence GNSEKKPTKENSK.

The protein belongs to the DEAD box helicase family. DDX31/DBP7 subfamily.

The protein localises to the nucleus. The protein resides in the nucleolus. The catalysed reaction is ATP + H2O = ADP + phosphate + H(+). In terms of biological role, ATP-binding RNA helicase involved in the biogenesis of 60S ribosomal subunits and is required for the normal formation of 25S and 5.8S rRNAs. The protein is ATP-dependent RNA helicase DBP7 (DBP7) of Saccharomyces cerevisiae (strain ATCC 204508 / S288c) (Baker's yeast).